Reading from the N-terminus, the 118-residue chain is Hydrogenase maturation factor HypA (118 aa).

His-2 is a Ni(2+) binding site. Cys-73, Cys-76, Cys-89, and Cys-92 together coordinate Zn(2+).

The protein belongs to the HypA/HybF family.

In terms of biological role, involved in the maturation of [NiFe] hydrogenases. Required for nickel insertion into the metal center of the hydrogenase. This is Hydrogenase maturation factor HypA from Shewanella oneidensis (strain ATCC 700550 / JCM 31522 / CIP 106686 / LMG 19005 / NCIMB 14063 / MR-1).